The sequence spans 470 residues: SHUGOSHIN 2 (470 aa).

A coiled-coil region spans residues 72 to 113 (IQKLRINLRSVQEKNLQLAQANSQMLAELNTNRDRLKDLQHE). Basic and acidic residues-rich tracts occupy residues 131 to 143 (VLPR…KDKV) and 150 to 162 (GDCK…DIKH). 2 disordered regions span residues 131–176 (VLPR…IKSS) and 358–470 (ESAG…RRKC). Over residues 163 to 172 (KDTKRKRTTR) the composition is skewed to basic residues. Over residues 370 to 381 (SESRHETKEITR) the composition is skewed to basic and acidic residues. The segment covering 382-392 (KRSFSTRRQST) has biased composition (basic residues). Composition is skewed to basic and acidic residues over residues 396-406 (SQTDEAIKEIA), 423-438 (TESK…EGMT), and 449-462 (HAAE…EVSL).

It belongs to the shugoshin family.

Dispensable for both meiotic and mitotic cell cycle progression. Required with SGO1 for full protection of centromeric cohesion during anaphase I. Required to prevent precocious release of pericentromeric cohesins during meiosis. Acts redundantly to SGO1. The polypeptide is SHUGOSHIN 2 (Arabidopsis thaliana (Mouse-ear cress)).